Reading from the N-terminus, the 235-residue chain is Glycerol-3-phosphate acyltransferase (235 aa).

Helical transmembrane passes span 4–24 (LIAI…IMAG), 56–76 (AVTL…VAFF), 94–114 (LLAG…GFKG), 122–142 (AGML…IFLL), 152–172 (VASI…KYIF), and 191–211 (FHDS…LAIL).

This sequence belongs to the PlsY family. As to quaternary structure, probably interacts with PlsX.

The protein localises to the cell inner membrane. It catalyses the reaction an acyl phosphate + sn-glycerol 3-phosphate = a 1-acyl-sn-glycero-3-phosphate + phosphate. Its pathway is lipid metabolism; phospholipid metabolism. Functionally, catalyzes the transfer of an acyl group from acyl-phosphate (acyl-PO(4)) to glycerol-3-phosphate (G3P) to form lysophosphatidic acid (LPA). This enzyme utilizes acyl-phosphate as fatty acyl donor, but not acyl-CoA or acyl-ACP. This is Glycerol-3-phosphate acyltransferase from Chlorobium phaeobacteroides (strain DSM 266 / SMG 266 / 2430).